A 500-amino-acid polypeptide reads, in one-letter code: Glycerol kinase (500 aa).

Threonine 13 is an ADP binding site. ATP-binding residues include threonine 13, threonine 14, and serine 15. Sn-glycerol 3-phosphate is bound at residue threonine 13. Arginine 17 is an ADP binding site. Sn-glycerol 3-phosphate contacts are provided by arginine 83, glutamate 84, tyrosine 135, and aspartate 244. The glycerol site is built by arginine 83, glutamate 84, tyrosine 135, aspartate 244, and glutamine 245. Positions 266 and 309 each coordinate ADP. Residues threonine 266, glycine 309, glutamine 313, and glycine 410 each contribute to the ATP site. ADP-binding residues include glycine 410 and asparagine 414.

The protein belongs to the FGGY kinase family.

The catalysed reaction is glycerol + ATP = sn-glycerol 3-phosphate + ADP + H(+). It functions in the pathway polyol metabolism; glycerol degradation via glycerol kinase pathway; sn-glycerol 3-phosphate from glycerol: step 1/1. Its activity is regulated as follows. Inhibited by fructose 1,6-bisphosphate (FBP). Functionally, key enzyme in the regulation of glycerol uptake and metabolism. Catalyzes the phosphorylation of glycerol to yield sn-glycerol 3-phosphate. The sequence is that of Glycerol kinase from Burkholderia ambifaria (strain MC40-6).